The following is a 262-amino-acid chain: Acyl-[acyl-carrier-protein]--UDP-N-acetylglucosamine O-acyltransferase (262 aa).

The protein belongs to the transferase hexapeptide repeat family. LpxA subfamily. As to quaternary structure, homotrimer.

The protein resides in the cytoplasm. It catalyses the reaction a (3R)-hydroxyacyl-[ACP] + UDP-N-acetyl-alpha-D-glucosamine = a UDP-3-O-[(3R)-3-hydroxyacyl]-N-acetyl-alpha-D-glucosamine + holo-[ACP]. The protein operates within glycolipid biosynthesis; lipid IV(A) biosynthesis; lipid IV(A) from (3R)-3-hydroxytetradecanoyl-[acyl-carrier-protein] and UDP-N-acetyl-alpha-D-glucosamine: step 1/6. Its function is as follows. Involved in the biosynthesis of lipid A, a phosphorylated glycolipid that anchors the lipopolysaccharide to the outer membrane of the cell. The protein is Acyl-[acyl-carrier-protein]--UDP-N-acetylglucosamine O-acyltransferase of Salmonella arizonae (strain ATCC BAA-731 / CDC346-86 / RSK2980).